We begin with the raw amino-acid sequence, 427 residues long: Glucose-1-phosphate adenylyltransferase (427 aa).

Residues Y121, G186, 201-202 (EK), and S219 contribute to the alpha-D-glucose 1-phosphate site.

This sequence belongs to the bacterial/plant glucose-1-phosphate adenylyltransferase family. In terms of assembly, homotetramer.

It carries out the reaction alpha-D-glucose 1-phosphate + ATP + H(+) = ADP-alpha-D-glucose + diphosphate. Its pathway is glycan biosynthesis; glycogen biosynthesis. In terms of biological role, involved in the biosynthesis of ADP-glucose, a building block required for the elongation reactions to produce glycogen. Catalyzes the reaction between ATP and alpha-D-glucose 1-phosphate (G1P) to produce pyrophosphate and ADP-Glc. The sequence is that of Glucose-1-phosphate adenylyltransferase from Corynebacterium diphtheriae (strain ATCC 700971 / NCTC 13129 / Biotype gravis).